Reading from the N-terminus, the 393-residue chain is Protein FAM47E (393 aa).

Positions Val-326–Ala-354 form a coiled coil.

The protein belongs to the FAM47 family. Interacts with PRMT5; the interaction is direct. Interacts with WDR77.

Its subcellular location is the nucleus. The protein resides in the chromosome. It localises to the cytoplasm. Functionally, promotes histone methylation by localizing the arginine methyltransferase PRMT5 to chromatin. This is Protein FAM47E (FAM47E) from Homo sapiens (Human).